The sequence spans 451 residues: Scaffold protein ILK (451 aa).

An N-acetylmethionine modification is found at methionine 1. ANK repeat units follow at residues 2 to 30, 31 to 63, 64 to 96, 97 to 129, and 130 to 174; these read DDIF…LNQG, DDHG…INVM, NRGD…INAV, NEHG…VSIC, and NKYG…GTTR. The interaction with LIMS1 stretch occupies residues 33–139; sequence HGFSPLHWAC…NKYGEMPMDK (107 aa). Threonine 173 is subject to Phosphothreonine. The tract at residues 180–212 is PH-like; mediates interaction with TGFB1I1; it reads GTLNKHSGIDFKQLNFLAKLNENHSGELWKGRW. Serine 186 bears the Phosphoserine mark. In terms of domain architecture, Protein kinase spans 193 to 445; it reads LNFLAKLNEN…PKFDMIVPIL (253 aa). Residues asparagine 200, asparagine 202, histidine 203, and serine 204 each contribute to the ATP site. Serine 246 bears the Phosphoserine mark. Positions 270, 272, and 279 each coordinate ATP. Aspartate 339 is a binding site for Mg(2+). Residue lysine 341 coordinates ATP. The Nuclear localization signal signature appears at 363-371; sequence KKPEDTNRR. Residue lysine 425 is modified to N6-acetyllysine.

It belongs to the protein kinase superfamily. TKL Ser/Thr protein kinase family. In terms of assembly, component of the heterotrimeric IPP (ILK-PINCH-PARVIN) complex composed of ILK, LIMS1/PINCH and PARVA; the complex binds to F-actin via the C-terminal tail of LIMS1 and the N-terminal region of PARVA, promoting F-actin filament bundling. Formation of the IPP complex is dependent on protein kinase C and precedes integrin-mediated cell adhesion and spreading. ILK also interacts with LIMS2/PINCH2 and with PARVB and PARVG which may substitute for LIMS1 and PARVA in the IPP complex; PARVA and PARVB compete for the same binding site. Interaction with PARVG promotes the establishment of cell polarity required for leukocyte migration. Interacts with the cytoplasmic domain of integrin ITGB1 and may also interact with integrins ITGB2, ITGB3 and/or ITGB5. Interacts probably also with TGFB1I1. Interacts (via ANK repeats) with EPHA1 (via SAM domain); stimulated by EFNA1 but independent of the kinase activity of EPHA1. Interacts with FERMT2. Interacts with LIMD2; leading to activate the protein kinase activity. Interacts with PXN/PAXILLIN (via LD motif 4). Interacts with CCDC25 (via cytoplasmic region); initiating the ILK-PARVB cascade to induce cytoskeleton rearrangement and directional migration of cells. Interacts with IQGAP1; the interaction is required for localization of IQGAP1 to the cell cortex. Post-translationally, phosphorylation by PAK1 modulates ILK subcellular location by promoting its nuclear export.

Its subcellular location is the cell junction. It localises to the focal adhesion. The protein localises to the cell membrane. It is found in the cell projection. The protein resides in the lamellipodium. Its subcellular location is the cytoplasm. It localises to the myofibril. The protein localises to the sarcomere. It is found in the nucleus. The protein resides in the cytoskeleton. Its subcellular location is the microtubule organizing center. It localises to the centrosome. The protein localises to the cell cortex. Scaffold protein which mediates protein-protein interactions during a range of cellular events including focal adhesion assembly, cell adhesion and cell migration. Regulates integrin-mediated signal transduction by contributing to inside-out integrin activation. Recruits PARVA and LIMS1/PITCH to form the heterotrimeric IPP (ILK-PINCH-PARVIN) complex which binds to F-actin via the C-terminal tail of LIMS1 and the N-terminal region of PARVA, promoting F-actin filament bundling, a process required to generate force for actin cytoskeleton reorganization and subsequent dynamic cell adhesion events such as cell spreading and migration. Binding to PARVA promotes effective assembly of ILK into focal adhesions while PARVA-bound ILK can simultaneously engage integrin-beta cytoplasmic tails to mediate cell adhesion. Plays a role with PARVG in promoting the cell adhesion and spreading of leukocytes. Acts as an upstream effector of both AKT1/PKB and GSK3. Mediates trafficking of caveolae to the cell surface in an ITGB1-dependent manner by promoting the recruitment of IQGAP1 to the cell cortex which cooperates with its effector DIAPH1 to locally stabilize microtubules and allow stable insertion of caveolae into the plasma membrane. Required for the maintenance of mitotic spindle integrity by promoting phosphorylation of TACC3 by AURKA. Associates with chromatin and may act as a negative regulator of transcription when located in the nucleus. This Cavia porcellus (Guinea pig) protein is Scaffold protein ILK.